Here is a 310-residue protein sequence, read N- to C-terminus: Aspartate carbamoyltransferase catalytic subunit (310 aa).

Carbamoyl phosphate contacts are provided by arginine 57 and threonine 58. Lysine 86 serves as a coordination point for L-aspartate. Carbamoyl phosphate is bound by residues arginine 107, histidine 135, and glutamine 138. The L-aspartate site is built by arginine 168 and arginine 229. 2 residues coordinate carbamoyl phosphate: leucine 268 and proline 269.

Belongs to the aspartate/ornithine carbamoyltransferase superfamily. ATCase family. As to quaternary structure, heterooligomer of catalytic and regulatory chains.

The catalysed reaction is carbamoyl phosphate + L-aspartate = N-carbamoyl-L-aspartate + phosphate + H(+). It participates in pyrimidine metabolism; UMP biosynthesis via de novo pathway; (S)-dihydroorotate from bicarbonate: step 2/3. Its function is as follows. Catalyzes the condensation of carbamoyl phosphate and aspartate to form carbamoyl aspartate and inorganic phosphate, the committed step in the de novo pyrimidine nucleotide biosynthesis pathway. This is Aspartate carbamoyltransferase catalytic subunit from Thermococcus onnurineus (strain NA1).